The following is an 856-amino-acid chain: Inactive rhomboid protein 1 (856 aa).

The disordered stretch occupies residues 1 to 20; that stretch reads MSEARRDSTSSLQRKKPPWL. The Cytoplasmic segment spans residues 1–412; sequence MSEARRDSTS…HRPFFTYWLT (412 aa). A phosphoserine mark is found at Ser76 and Ser176. Phosphothreonine is present on residues Thr180 and Thr183. Residue Ser391 is modified to Phosphoserine. Residues 413-433 traverse the membrane as a helical segment; that stretch reads FVHSLVTILAVCIYGIAPVGF. Residues 434 to 656 lie on the Lumenal side of the membrane; it reads SQHETVDSVL…NPEVPDQFYR (223 aa). Asn584 is a glycosylation site (N-linked (GlcNAc...) asparagine). Residues 657 to 677 traverse the membrane as a helical segment; it reads LWLSLFLHAGILHCLVSVCFQ. Over 678 to 692 the chain is Cytoplasmic; it reads MTVLRDLEKLAGWHR. A helical membrane pass occupies residues 693 to 713; that stretch reads IAIIYLLSGVTGNLASAIFLP. The Lumenal portion of the chain corresponds to 714–715; the sequence is YR. A helical transmembrane segment spans residues 716–736; that stretch reads AEVGPAGSQFGILACLFVELF. At 737–747 the chain is on the cytoplasmic side; the sequence is QSWQILARPWR. The helical transmembrane segment at 748 to 768 threads the bilayer; it reads AFFKLLAVVLFLFAFGLLPWI. Residues 769 to 773 lie on the Lumenal side of the membrane; that stretch reads DNFAH. A helical transmembrane segment spans residues 774–794; sequence ISGFVSGLFLSFAFLPYISFG. At 795 to 804 the chain is on the cytoplasmic side; sequence KFDLYRKRCQ. Residues 805–825 form a helical membrane-spanning segment; that stretch reads IIIFQAVFLGLLAGLVVLFYF. Over 826–856 the chain is Lumenal; sequence YPVRCEWCEFLTCIPFTDKFCEKYELDAQLH.

This sequence belongs to the peptidase S54 family. Homodimer, or homooligomer. Interacts with TGFA and HBEGF. Interacts with EGF; may retain EGF in the endoplasmic reticulum and regulates its degradation through the endoplasmic reticulum-associated degradation (ERAD). Interacts (via cytoplasmic N-terminus) with FRMD8/iTAP; this interaction leads to mutual protein stabilization. Interacts with ADAM17/TACE.

Its subcellular location is the endoplasmic reticulum membrane. The protein localises to the golgi apparatus membrane. Regulates ADAM17 protease, a sheddase of the epidermal growth factor (EGF) receptor ligands and TNF, thereby plays a role in sleep, cell survival, proliferation, migration and inflammation. Does not exhibit any protease activity on its own. This Rattus norvegicus (Rat) protein is Inactive rhomboid protein 1 (Rhbdf1).